Here is a 1302-residue protein sequence, read N- to C-terminus: RNA-directed RNA polymerase (1302 aa).

The 262-residue stretch at V562–V823 folds into the RdRp catalytic domain.

It belongs to the reoviridae RNA-directed RNA polymerase family.

It carries out the reaction RNA(n) + a ribonucleoside 5'-triphosphate = RNA(n+1) + diphosphate. The chain is RNA-directed RNA polymerase (Segment-1) from Antilocapra americana (Pronghorn).